We begin with the raw amino-acid sequence, 161 residues long: Small heat shock protein hspJ (161 aa).

One can recognise a sHSP domain in the interval 52–161; sequence SKFTSLNPKL…FEKEIKINIE (110 aa).

The protein belongs to the small heat shock protein (HSP20) family.

This is Small heat shock protein hspJ (hspJ) from Dictyostelium discoideum (Social amoeba).